We begin with the raw amino-acid sequence, 247 residues long: Cementoblastoma-derived protein 1 (247 aa).

The segment covering 1 to 28 has biased composition (polar residues); it reads MGTSSTDSQQAGHRRCSTSNTSAENLTC. Disordered stretches follow at residues 1–52 and 147–183; these read MGTS…AGQP and EENS…EKVK.

In terms of processing, phosphorylated. N-glycosylated. Expressed by cementoblasts, a subpopulation of periodontal ligament cells and cells located around vessels in periodontium (at protein level).

It localises to the cytoplasm. The protein localises to the nucleus. In terms of biological role, may play a role in development of the periodontium which surrounds and supports the teeth by promoting the differentiation of multi-potent cells from the periodontal ligament into cementoblasts to form the cementum. Binds hydroxyapatite and may promote the biomineralization of the cementum. Also promotes cell proliferation. The sequence is that of Cementoblastoma-derived protein 1 from Homo sapiens (Human).